Here is a 183-residue protein sequence, read N- to C-terminus: Copper metallothionein 2 (183 aa).

Positions 1 to 35 (MAFNPNPEKTTSCCSTSKAQDKCTCPKGKCECETC) are cys-rich copper-binding 1. Residues 36-45 (PKSTKTPGSG) are spacer B1. The interval 46–79 (PCNCGVKEKVSTCGCNGSGAACTCPPGQCACDSC) is cys-rich copper-binding 2. Residues 80–88 (PRKAKSVST) form a spacer B2 region. The cys-rich copper-binding 3 stretch occupies residues 89–110 (CGCGGSAAACSCPPGKCACDSC). The segment at 111–120 (PKQAQEKVSS) is spacer B3. Residues 121–142 (CACNGSGGACTCPPGKCSCSGC) are cys-rich copper-binding 4. Residues 143–156 (PAQAKENPADQPTT) form a spacer B4 region. The tract at residues 157–183 (CGCQGVGVACTCPPGQCACDGCPAKAK) is cys-rich copper-binding 5.

This sequence belongs to the metallothionein superfamily.

It is found in the cytoplasm. It localises to the cell cortex. In terms of biological role, copper metallothionein that protects the cell against copper toxicity by tightly chelating copper ions. Required for antioxidant-mediated growth rescue in the presence of fluconazole. Acts as a critical factors for lung colonization and virulence. The protein is Copper metallothionein 2 of Cryptococcus neoformans var. grubii serotype A (strain H99 / ATCC 208821 / CBS 10515 / FGSC 9487) (Filobasidiella neoformans var. grubii).